A 750-amino-acid chain; its full sequence is Photosystem I P700 chlorophyll a apoprotein A1 (750 aa).

8 helical membrane-spanning segments follow: residues 70-93, 156-179, 195-219, 291-309, 346-369, 385-411, 433-455, and 531-549; these read VFSA…FHGA, LYCT…FHYH, LNHH…HVSL, IAHH…GHMY, WHAQ…HHMY, LSLF…IFMV, AIIS…LYIH, and FLVH…LILL. [4Fe-4S] cluster contacts are provided by Cys-573 and Cys-582. A run of 2 helical transmembrane segments spans residues 589–610 and 664–686; these read HVFL…HFSW and LSAY…MFLF. His-675 is a binding site for chlorophyll a'. Chlorophyll a contacts are provided by Met-683 and Tyr-691. Trp-692 contributes to the phylloquinone binding site. A helical transmembrane segment spans residues 724 to 744; the sequence is AVGVTHYLLGGIATTWAFFLA.

Belongs to the PsaA/PsaB family. The PsaA/B heterodimer binds the P700 chlorophyll special pair and subsequent electron acceptors. PSI consists of a core antenna complex that captures photons, and an electron transfer chain that converts photonic excitation into a charge separation. The eukaryotic PSI reaction center is composed of at least 11 subunits. It depends on P700 is a chlorophyll a/chlorophyll a' dimer, A0 is one or more chlorophyll a, A1 is one or both phylloquinones and FX is a shared 4Fe-4S iron-sulfur center. as a cofactor.

It is found in the plastid. The protein localises to the chloroplast thylakoid membrane. It catalyses the reaction reduced [plastocyanin] + hnu + oxidized [2Fe-2S]-[ferredoxin] = oxidized [plastocyanin] + reduced [2Fe-2S]-[ferredoxin]. PsaA and PsaB bind P700, the primary electron donor of photosystem I (PSI), as well as the electron acceptors A0, A1 and FX. PSI is a plastocyanin-ferredoxin oxidoreductase, converting photonic excitation into a charge separation, which transfers an electron from the donor P700 chlorophyll pair to the spectroscopically characterized acceptors A0, A1, FX, FA and FB in turn. Oxidized P700 is reduced on the lumenal side of the thylakoid membrane by plastocyanin. The chain is Photosystem I P700 chlorophyll a apoprotein A1 from Aethionema grandiflorum (Persian stone-cress).